The primary structure comprises 276 residues: NAD-capped RNA hydrolase NudC (276 aa).

A substrate-binding site is contributed by R82. 2 residues coordinate Zn(2+): C112 and C115. A substrate-binding site is contributed by E125. The Zn(2+) site is built by C130 and C133. Y138 is a binding site for substrate. Residues P139–Y262 enclose the Nudix hydrolase domain. A divalent metal cation contacts are provided by A172, E188, and E192. Residues G173–A194 carry the Nudix box motif. Q206 to S213 lines the substrate pocket. Residue E233 coordinates a divalent metal cation. A255 serves as a coordination point for substrate.

The protein belongs to the Nudix hydrolase family. NudC subfamily. In terms of assembly, homodimer. The cofactor is Mg(2+). Mn(2+) is required as a cofactor. Zn(2+) serves as cofactor.

It catalyses the reaction a 5'-end NAD(+)-phospho-ribonucleoside in mRNA + H2O = a 5'-end phospho-adenosine-phospho-ribonucleoside in mRNA + beta-nicotinamide D-ribonucleotide + 2 H(+). The enzyme catalyses NAD(+) + H2O = beta-nicotinamide D-ribonucleotide + AMP + 2 H(+). It carries out the reaction NADH + H2O = reduced beta-nicotinamide D-ribonucleotide + AMP + 2 H(+). Its function is as follows. mRNA decapping enzyme that specifically removes the nicotinamide adenine dinucleotide (NAD) cap from a subset of mRNAs by hydrolyzing the diphosphate linkage to produce nicotinamide mononucleotide (NMN) and 5' monophosphate mRNA. The NAD-cap is present at the 5'-end of some mRNAs and stabilizes RNA against 5'-processing. Has preference for mRNAs with a 5'-end purine. Catalyzes the hydrolysis of a broad range of dinucleotide pyrophosphates. In Pseudomonas putida (strain ATCC 47054 / DSM 6125 / CFBP 8728 / NCIMB 11950 / KT2440), this protein is NAD-capped RNA hydrolase NudC.